The sequence spans 269 residues: Senescence-associated protein 13 (269 aa).

21–45 (LVTGGSKGIGEAVVEELAMLGAKVH) is a binding site for NADP(+). Serine 154 is a binding site for substrate. Tyrosine 167 acts as the Proton acceptor in catalysis.

The protein belongs to the short-chain dehydrogenases/reductases (SDR) family. SDR65C subfamily.

Unspecific reductase providing both diastereomeric alcohols from the prochiral ketones. Active on cyclic monoterpenes and small flexible lipophilic carbonyls. No activity with tropinone, nitrogen-containing tropinone analogs, tropine or pseudotropine as substrate. In Arabidopsis thaliana (Mouse-ear cress), this protein is Senescence-associated protein 13.